Reading from the N-terminus, the 769-residue chain is 5-methyltetrahydropteroyltriglutamate--homocysteine methyltransferase (769 aa).

Residues Arg16–Lys19 and Lys121 each bind 5-methyltetrahydropteroyltri-L-glutamate. The tract at residues Ser415–Thr450 is disordered. A compositionally biased stretch (polar residues) spans Leu439–Gln449. Residues Ile444–Ser446 and Glu497 each bind L-homocysteine. Residues Ile444 to Ser446 and Glu497 each bind L-methionine. Residues Arg528 to Cys529 and Trp574 contribute to the 5-methyltetrahydropteroyltri-L-glutamate site. Asp612 serves as a coordination point for L-homocysteine. Residue Asp612 participates in L-methionine binding. Glu618 serves as a coordination point for 5-methyltetrahydropteroyltri-L-glutamate. The Zn(2+) site is built by His654, Cys656, and Glu678. His707 functions as the Proton donor in the catalytic mechanism. Cys739 contributes to the Zn(2+) binding site.

It belongs to the vitamin-B12 independent methionine synthase family. It depends on Zn(2+) as a cofactor.

The enzyme catalyses 5-methyltetrahydropteroyltri-L-glutamate + L-homocysteine = tetrahydropteroyltri-L-glutamate + L-methionine. Its pathway is amino-acid biosynthesis; L-methionine biosynthesis via de novo pathway; L-methionine from L-homocysteine (MetE route): step 1/1. In terms of biological role, catalyzes the transfer of a methyl group from 5-methyltetrahydrofolate to homocysteine resulting in methionine formation. The sequence is that of 5-methyltetrahydropteroyltriglutamate--homocysteine methyltransferase from Salinibacter ruber (strain DSM 13855 / M31).